The following is a 53-amino-acid chain: uncharacterized protein (53 aa).

Residues 18-38 (FLFFIFYFLFFFIFFTVFGNL) traverse the membrane as a helical segment.

It localises to the membrane. This is an uncharacterized protein from Dictyostelium discoideum (Social amoeba).